We begin with the raw amino-acid sequence, 1068 residues long: Receptor-like protein 13 (1068 aa).

The signal sequence occupies residues 1–23 (MEGKLFLGQYLICVILLLGQLHG). The Extracellular portion of the chain corresponds to 24-986 (YKSCIEKERK…EADESTVDME (963 aa)). 2 N-linked (GlcNAc...) asparagine glycosylation sites follow: N59 and N97. 19 LRR repeats span residues 104–129 (FEDV…LFDD), 139–162 (LRNL…FLNA), 164–187 (TSLT…EFKD), 188–212 (LTNL…DYNS), 216–239 (FRKL…FLNS), 241–264 (TSLK…ELRD), 265–290 (LTNV…LFAL), 292–315 (KLKA…KFAK), 325–349 (WKNM…LTSL), 350–373 (TGLR…LANL), 375–397 (SLEY…LLAN), 398–423 (LSKL…SWKP), 424–447 (KFQL…LLHQ), 448–471 (KDLH…LLEN), 472–497 (NTKL…AHNL), 499–517 (FLNV…NFGW), 519–543 (LPHL…LDNM), 544–567 (KSIE…FLKG), and 569–594 (YNLT…NFTR). N153 carries an N-linked (GlcNAc...) asparagine glycan. The N-linked (GlcNAc...) asparagine glycan is linked to N202. A glycan (N-linked (GlcNAc...) asparagine) is linked at N279. N397 carries N-linked (GlcNAc...) asparagine glycosylation. N-linked (GlcNAc...) asparagine glycans are attached at residues N471, N482, and N501. N-linked (GlcNAc...) asparagine glycans are attached at residues N570 and N591. Residues 596–615 (WVMSMDNNLFTGNIGKGFRS) form an LRR 20; degenerate repeat. 5 LRR repeats span residues 616-639 (LPSL…WIGE), 641-664 (QGLF…LFNI), 665-688 (SYLQ…VSSI), 690-710 (HGAV…DTLL), and 711-734 (LNVI…INTQ). N-linked (GlcNAc...) asparagine glycosylation occurs at N663. An N-linked (GlcNAc...) asparagine glycan is attached at N700. Residues N735, N745, N771, N780, and N822 are each glycosylated (N-linked (GlcNAc...) asparagine). 2 LRR repeats span residues 736 to 757 (ISIL…FCSL) and 758 to 781 (SNIQ…LSNT). 4 LRR repeats span residues 846 to 870 (LKLL…LGGL), 871 to 893 (VELE…SFSG), 895 to 918 (KNVE…LTDM), and 920 to 943 (SLAV…QFNT). N-linked (GlcNAc...) asparagine glycosylation is found at N877 and N882. Residues N925 and N930 are each glycosylated (N-linked (GlcNAc...) asparagine). The helical transmembrane segment at 987 to 1007 (SFYWSFVAAYVTILLGILASL) threads the bilayer. Residues 1008 to 1068 (SFDSPWSRAW…PPALFHKTRT (61 aa)) are Cytoplasmic-facing.

This sequence belongs to the RLP family.

It is found in the cell membrane. The chain is Receptor-like protein 13 from Arabidopsis thaliana (Mouse-ear cress).